Reading from the N-terminus, the 478-residue chain is Noelin-3 (478 aa).

The signal sequence occupies residues Met1 to Ser23. Asn33, Asn95, Asn179, Asn299, and Asn465 each carry an N-linked (GlcNAc...) asparagine glycan. The stretch at Cys77–Leu217 forms a coiled coil. The region spanning Thr218 to His470 is the Olfactomedin-like domain. Cys219 and Cys401 are joined by a disulfide.

In terms of assembly, peripherally associated with AMPAR complex. AMPAR complex consists of an inner core made of 4 pore-forming GluA/GRIA proteins (GRIA1, GRIA2, GRIA3 and GRIA4) and 4 major auxiliary subunits arranged in a twofold symmetry. One of the two pairs of distinct binding sites is occupied either by CNIH2, CNIH3 or CACNG2, CACNG3. The other harbors CACNG2, CACNG3, CACNG4, CACNG8 or GSG1L. This inner core of AMPAR complex is complemented by outer core constituents binding directly to the GluA/GRIA proteins at sites distinct from the interaction sites of the inner core constituents. Outer core constituents include at least PRRT1, PRRT2, CKAMP44/SHISA9, FRRS1L and NRN1. The proteins of the inner and outer core serve as a platform for other, more peripherally associated AMPAR constituents, including OLFM3. Alone or in combination, these auxiliary subunits control the gating and pharmacology of the AMPAR complex and profoundly impact their biogenesis and protein processing. Homodimer. Interacts with MYOC. Interacts with OLFM2. Expressed in the brain (at protein level). Also expressed in the retina, mainly in the ganglion cell layer and in the amacrine cell subregion of the inner nuclear layer. Expressed at high levels in the epithelial cells of the posterior iris and the ciliary body and, at lower levels, in the trabecular meshwork. Isoform 2 preferentially expressed in retina and brain, while isoform 1 preferentially expressed in the tissues of the eye angle.

Its subcellular location is the secreted. The protein resides in the synapse. This is Noelin-3 (Olfm3) from Rattus norvegicus (Rat).